The following is a 998-amino-acid chain: Type II restriction enzyme and methyltransferase RM.Eco57I (998 aa).

It in the C-terminal section; belongs to the N(4)/N(6)-methyltransferase family. Monomer.

The catalysed reaction is Endonucleolytic cleavage of DNA to give specific double-stranded fragments with terminal 5'-phosphates.. It catalyses the reaction a 2'-deoxyadenosine in DNA + S-adenosyl-L-methionine = an N(6)-methyl-2'-deoxyadenosine in DNA + S-adenosyl-L-homocysteine + H(+). Its activity is regulated as follows. Mg(2+) is absolutely required for DNA restriction. In terms of biological role, an E, G and S subtype restriction enzyme that recognizes the (non-palindromic) double-stranded sequence 5'-CTGAAG-3' and cleaves respectively 22 bases after C-1 and 14 bases before C'-1; cleavage of lambda DNA is never complete. Also acts as a methylase that causes specific methylation on A-5 in 5'-CTGAAG-3', the other strand is methylated by the M.Eco57I methylase. This chain is Type II restriction enzyme and methyltransferase RM.Eco57I, found in Escherichia coli.